We begin with the raw amino-acid sequence, 315 residues long: DNA-directed RNA polymerase subunit alpha (315 aa).

Residues 1–228 are alpha N-terminal domain (alpha-NTD); sequence MIGMEKPKIE…EHLELFISLT (228 aa). The alpha C-terminal domain (alpha-CTD) stretch occupies residues 245–315; it reads RNKLMEMTIE…FGLSLRQPDD (71 aa).

The protein belongs to the RNA polymerase alpha chain family. Homodimer. The RNAP catalytic core consists of 2 alpha, 1 beta, 1 beta' and 1 omega subunit. When a sigma factor is associated with the core the holoenzyme is formed, which can initiate transcription.

The enzyme catalyses RNA(n) + a ribonucleoside 5'-triphosphate = RNA(n+1) + diphosphate. In terms of biological role, DNA-dependent RNA polymerase catalyzes the transcription of DNA into RNA using the four ribonucleoside triphosphates as substrates. The protein is DNA-directed RNA polymerase subunit alpha of Symbiobacterium thermophilum (strain DSM 24528 / JCM 14929 / IAM 14863 / T).